The following is a 764-amino-acid chain: A-type ATP synthase subunit A (764 aa).

The protein belongs to the ATPase alpha/beta chains family. In terms of assembly, has multiple subunits with at least A(3), B(3), C, D, E, F, H, I and proteolipid K(x). This protein undergoes a protein self splicing that involves a post-translational excision of the VDE intervening region (intein) followed by peptide ligation.

It localises to the cell membrane. It carries out the reaction ATP + H2O + 4 H(+)(in) = ADP + phosphate + 5 H(+)(out). Component of the A-type ATP synthase that produces ATP from ADP in the presence of a proton gradient across the membrane. The A chain is the catalytic subunit. The polypeptide is A-type ATP synthase subunit A (Thermoplasma acidophilum (strain ATCC 25905 / DSM 1728 / JCM 9062 / NBRC 15155 / AMRC-C165)).